Reading from the N-terminus, the 206-residue chain is Large ribosomal subunit protein uL4 (206 aa).

A disordered region spans residues 51-76 (AKTRAEVSGGGIKPWRQKGTGRARQG).

This sequence belongs to the universal ribosomal protein uL4 family. In terms of assembly, part of the 50S ribosomal subunit.

In terms of biological role, one of the primary rRNA binding proteins, this protein initially binds near the 5'-end of the 23S rRNA. It is important during the early stages of 50S assembly. It makes multiple contacts with different domains of the 23S rRNA in the assembled 50S subunit and ribosome. Functionally, forms part of the polypeptide exit tunnel. This chain is Large ribosomal subunit protein uL4, found in Clostridium kluyveri (strain ATCC 8527 / DSM 555 / NBRC 12016 / NCIMB 10680 / K1).